A 229-amino-acid polypeptide reads, in one-letter code: MATWSNLGLQDSASPLMEQLNFFHDHTLLILIMITILVGYLMLMLFFNKFTNRFLLHGQTIEIIWTILPAIVLMFIALPSLRILYLLDEINSPAITLKTIGHQWYWSYEYSDFMNLEFDSYMVPTNELETNGFRLLDVDNRIVLPMNTQIRILVTAADVIHSWTVPALGVKVDGTPGRLNQTNFLMNRPGLFFGQCSEICGANHSFMPIVLESSPTNYFIKWITAMNSN.

Over methionine 1–histidine 26 the chain is Mitochondrial intermembrane. A helical transmembrane segment spans residues threonine 27 to asparagine 48. Residues lysine 49–glutamate 62 lie on the Mitochondrial matrix side of the membrane. A helical membrane pass occupies residues isoleucine 63–arginine 82. Over isoleucine 83 to asparagine 229 the chain is Mitochondrial intermembrane. Histidine 161, cysteine 196, glutamate 198, cysteine 200, histidine 204, and methionine 207 together coordinate Cu cation. Residue glutamate 198 coordinates Mg(2+).

The protein belongs to the cytochrome c oxidase subunit 2 family. Component of the cytochrome c oxidase (complex IV, CIV), a multisubunit enzyme composed of a catalytic core of 3 subunits and several supernumerary subunits. The complex exists as a monomer or a dimer and forms supercomplexes (SCs) in the inner mitochondrial membrane with ubiquinol-cytochrome c oxidoreductase (cytochrome b-c1 complex, complex III, CIII). Requires Cu cation as cofactor.

Its subcellular location is the mitochondrion inner membrane. It catalyses the reaction 4 Fe(II)-[cytochrome c] + O2 + 8 H(+)(in) = 4 Fe(III)-[cytochrome c] + 2 H2O + 4 H(+)(out). In terms of biological role, component of the cytochrome c oxidase, the last enzyme in the mitochondrial electron transport chain which drives oxidative phosphorylation. The respiratory chain contains 3 multisubunit complexes succinate dehydrogenase (complex II, CII), ubiquinol-cytochrome c oxidoreductase (cytochrome b-c1 complex, complex III, CIII) and cytochrome c oxidase (complex IV, CIV), that cooperate to transfer electrons derived from NADH and succinate to molecular oxygen, creating an electrochemical gradient over the inner membrane that drives transmembrane transport and the ATP synthase. Cytochrome c oxidase is the component of the respiratory chain that catalyzes the reduction of oxygen to water. Electrons originating from reduced cytochrome c in the intermembrane space (IMS) are transferred via the dinuclear copper A center (CU(A)) of subunit 2 and heme A of subunit 1 to the active site in subunit 1, a binuclear center (BNC) formed by heme A3 and copper B (CU(B)). The BNC reduces molecular oxygen to 2 water molecules using 4 electrons from cytochrome c in the IMS and 4 protons from the mitochondrial matrix. In Simulium vittatum (Striped black fly), this protein is Cytochrome c oxidase subunit 2 (COII).